Here is an 83-residue protein sequence, read N- to C-terminus: MKAALLLVIFSLMLIGVLTKKSGYPTDHEGCKNWCVLNHSCGILCEGYGGSGYCYFWKLACWCDDIHNWVPTWSRATNKCRAK.

Residues 1 to 19 (MKAALLLVIFSLMLIGVLT) form the signal peptide. The LCN-type CS-alpha/beta domain maps to 21 to 81 (KSGYPTDHEG…TWSRATNKCR (61 aa)). Intrachain disulfides connect C31-C80, C35-C54, C41-C61, and C45-C63. Residue K83 is a propeptide, removed by a carboxypeptidase.

This sequence belongs to the long (4 C-C) scorpion toxin superfamily. Sodium channel inhibitor family. Beta subfamily. In terms of tissue distribution, expressed by the venom gland.

It is found in the secreted. This toxin increases the peak sodium current, slows down the inactivation of sodium channels (Nav), and prolongs the action potential of dorsal root ganglion neurons, which indicates that it behaves as a classical alpha-toxin. It binds to mammal brain and insect sodium channels, but with a different manner. This peptide may bind to a distinct receptor site on mammal brain sodium channels, which is unconnected with that for BmKAS (a beta-toxin), BmKIT2 (a beta-toxin) or BmK I (an alpha toxin). In contrast, the receptor site for BmKabT on insect sodium channels might be closely related to that for the beta-insect depressant toxin BmKIT2. Possesses potent toxicity in mice but induces only paralysis in cotton bollworm. In Olivierus martensii (Manchurian scorpion), this protein is Toxin BmKBT.